Reading from the N-terminus, the 136-residue chain is Flagellar basal-body rod protein FlgC (136 aa).

This sequence belongs to the flagella basal body rod proteins family. As to quaternary structure, the basal body constitutes a major portion of the flagellar organelle and consists of four rings (L,P,S, and M) mounted on a central rod. The rod consists of about 26 subunits of FlgG in the distal portion, and FlgB, FlgC and FlgF are thought to build up the proximal portion of the rod with about 6 subunits each.

The protein resides in the bacterial flagellum basal body. The polypeptide is Flagellar basal-body rod protein FlgC (flgC) (Buchnera aphidicola subsp. Acyrthosiphon pisum (strain APS) (Acyrthosiphon pisum symbiotic bacterium)).